Reading from the N-terminus, the 196-residue chain is Small ribosomal subunit protein uS4c (196 aa).

Residues 15-36 (LGTLPGLTSKRPRSGSDLKNPL) form a disordered region. The region spanning 89–150 (MRLDNILFRL…KQRSKALIQN (62 aa)) is the S4 RNA-binding domain.

This sequence belongs to the universal ribosomal protein uS4 family. In terms of assembly, part of the 30S ribosomal subunit. Contacts protein S5. The interaction surface between S4 and S5 is involved in control of translational fidelity.

Its subcellular location is the plastid. The protein localises to the chloroplast. In terms of biological role, one of the primary rRNA binding proteins, it binds directly to 16S rRNA where it nucleates assembly of the body of the 30S subunit. Its function is as follows. With S5 and S12 plays an important role in translational accuracy. This chain is Small ribosomal subunit protein uS4c (rps4), found in Yucca filamentosa (Bear-grass).